Reading from the N-terminus, the 555-residue chain is Dihydroxy-acid dehydratase (555 aa).

Mg(2+) is bound at residue Asp-78. Residue Cys-119 participates in [2Fe-2S] cluster binding. Residues Asp-120 and Lys-121 each coordinate Mg(2+). N6-carboxylysine is present on Lys-121. Cys-191 contributes to the [2Fe-2S] cluster binding site. Glu-444 is a Mg(2+) binding site. The Proton acceptor role is filled by Ser-470.

It belongs to the IlvD/Edd family. As to quaternary structure, homodimer. The cofactor is [2Fe-2S] cluster. Requires Mg(2+) as cofactor.

The enzyme catalyses (2R)-2,3-dihydroxy-3-methylbutanoate = 3-methyl-2-oxobutanoate + H2O. It catalyses the reaction (2R,3R)-2,3-dihydroxy-3-methylpentanoate = (S)-3-methyl-2-oxopentanoate + H2O. Its pathway is amino-acid biosynthesis; L-isoleucine biosynthesis; L-isoleucine from 2-oxobutanoate: step 3/4. It participates in amino-acid biosynthesis; L-valine biosynthesis; L-valine from pyruvate: step 3/4. Its function is as follows. Functions in the biosynthesis of branched-chain amino acids. Catalyzes the dehydration of (2R,3R)-2,3-dihydroxy-3-methylpentanoate (2,3-dihydroxy-3-methylvalerate) into 2-oxo-3-methylpentanoate (2-oxo-3-methylvalerate) and of (2R)-2,3-dihydroxy-3-methylbutanoate (2,3-dihydroxyisovalerate) into 2-oxo-3-methylbutanoate (2-oxoisovalerate), the penultimate precursor to L-isoleucine and L-valine, respectively. The protein is Dihydroxy-acid dehydratase of Oleidesulfovibrio alaskensis (strain ATCC BAA-1058 / DSM 17464 / G20) (Desulfovibrio alaskensis).